Reading from the N-terminus, the 312-residue chain is Very-long-chain 3-oxoacyl-CoA reductase (312 aa).

The helical transmembrane segment at 4–24 threads the bilayer; the sequence is ALPAAGFLYWVGASTIAYLTL. 50–79 lines the NADP(+) pocket; it reads GEWAVVTGGTDGIGKSYAEELAKRGMKIVL. Transmembrane regions (helical) follow at residues 182 to 202 and 271 to 291; these read GVIL…LTVY and GYVI…WIYF. A substrate-binding site is contributed by serine 189. Tyrosine 202 acts as the Proton acceptor in catalysis. The short motif at 308–312 is the Di-lysine motif element; the sequence is KTKKN.

The protein belongs to the short-chain dehydrogenases/reductases (SDR) family. 17-beta-HSD 3 subfamily.

Its subcellular location is the endoplasmic reticulum membrane. It catalyses the reaction a very-long-chain (3R)-3-hydroxyacyl-CoA + NADP(+) = a very-long-chain 3-oxoacyl-CoA + NADPH + H(+). The catalysed reaction is 17beta-estradiol + NAD(+) = estrone + NADH + H(+). The enzyme catalyses 17beta-estradiol + NADP(+) = estrone + NADPH + H(+). It carries out the reaction 3-oxooctadecanoyl-CoA + NADPH + H(+) = (3R)-hydroxyoctadecanoyl-CoA + NADP(+). It catalyses the reaction (7Z,10Z,13Z,16Z)-3-oxodocosatetraenoyl-CoA + NADPH + H(+) = (3R)-hydroxy-(7Z,10Z,13Z,16Z)-docosatetraenoyl-CoA + NADP(+). The catalysed reaction is 3-oxo-(7Z,10Z,13Z,16Z,19Z)-docosapentaenoyl-CoA + NADPH + H(+) = (3R)-hydroxy-(7Z,10Z,13Z,16Z,19Z)-docosapentaenoyl-CoA + NADP(+). The enzyme catalyses (8Z,11Z,14Z)-3-oxoeicosatrienoyl-CoA + NADPH + H(+) = (3R)-hydroxy-(8Z,11Z,14Z)-eicosatrienoyl-CoA + NADP(+). Its pathway is lipid metabolism; fatty acid biosynthesis. It functions in the pathway steroid biosynthesis; estrogen biosynthesis. Functionally, catalyzes the second of the four reactions of the long-chain fatty acids elongation cycle. This endoplasmic reticulum-bound enzymatic process, allows the addition of two carbons to the chain of long- and very long-chain fatty acids/VLCFAs per cycle. This enzyme has a 3-ketoacyl-CoA reductase activity, reducing 3-ketoacyl-CoA to 3-hydroxyacyl-CoA, within each cycle of fatty acid elongation. Thereby, it may participate in the production of VLCFAs of different chain lengths that are involved in multiple biological processes as precursors of membrane lipids and lipid mediators. May also catalyze the transformation of estrone (E1) into estradiol (E2) and play a role in estrogen formation. This is Very-long-chain 3-oxoacyl-CoA reductase from Rattus norvegicus (Rat).